Reading from the N-terminus, the 262-residue chain is Ribosome-recycling factor, mitochondrial (262 aa).

The N-terminal 55 residues, 1–55 (MALGIRCFRLLHPAFSSYLADLSRPVSEVPMKTVRGRQRDHIQYSAHPAVPVRQF), are a transit peptide targeting the mitochondrion.

The protein belongs to the RRF family.

The protein localises to the mitochondrion. Functionally, responsible for the disassembly of ribosomes from messenger RNA at the termination of mitochondrial protein biosynthesis. Acts in collaboration with GFM2. Promotes mitochondrial ribosome recycling by dissolution of intersubunit contacts. In Rattus norvegicus (Rat), this protein is Ribosome-recycling factor, mitochondrial (Mrrf).